The sequence spans 139 residues: ATP synthase epsilon chain (139 aa).

Positions 89-110 are disordered; it reads EARAEQARAEAEARRREAQSER.

Belongs to the ATPase epsilon chain family. In terms of assembly, F-type ATPases have 2 components, CF(1) - the catalytic core - and CF(0) - the membrane proton channel. CF(1) has five subunits: alpha(3), beta(3), gamma(1), delta(1), epsilon(1). CF(0) has three main subunits: a, b and c.

Its subcellular location is the cell membrane. Functionally, produces ATP from ADP in the presence of a proton gradient across the membrane. The protein is ATP synthase epsilon chain of Chloroflexus aurantiacus (strain ATCC 29366 / DSM 635 / J-10-fl).